Consider the following 115-residue polypeptide: Migration and invasion enhancer 1 (115 aa).

An N-acetylserine modification is found at S2. Residues C30 and C33 are joined by a disulfide bond. The S-geranylgeranyl cysteine moiety is linked to residue C112. Positions 113–115 are cleaved as a propeptide — removed in mature form; it reads VIL.

This sequence belongs to the SelWTH family. As to quaternary structure, interacts with GPX1. In terms of processing, isoprenylation facilitates association with the plasma membrane and enhances the migratory phenotype of cells by inducing increased filopodia formation. In terms of tissue distribution, widely expressed with highest levels in kidney followed by brain and testis.

The protein localises to the cytoplasm. Its subcellular location is the cytosol. It localises to the cell membrane. Functionally, increases cell migration by inducing filopodia formation at the leading edge of migrating cells. Plays a role in regulation of apoptosis, possibly through control of CASP3. May be involved in a redox-related process. The chain is Migration and invasion enhancer 1 (Mien1) from Mus musculus (Mouse).